The following is a 266-amino-acid chain: Regulatory protein RecX (266 aa).

Belongs to the RecX family.

Its subcellular location is the cytoplasm. Functionally, modulates RecA activity. This chain is Regulatory protein RecX, found in Levilactobacillus brevis (strain ATCC 367 / BCRC 12310 / CIP 105137 / JCM 1170 / LMG 11437 / NCIMB 947 / NCTC 947) (Lactobacillus brevis).